The chain runs to 327 residues: uncharacterized protein (327 aa).

The interval 129-306 (TPLQNQEATT…DNKKTVTTSS (178 aa)) is disordered. The span at 130–144 (PLQNQEATTSPTIES) shows a compositional bias: polar residues. Basic and acidic residues-rich tracts occupy residues 184–196 (KSVE…DRNV) and 233–276 (TKDE…EKIV).

This is an uncharacterized protein from Caenorhabditis elegans.